The primary structure comprises 247 residues: Carboxy-S-adenosyl-L-methionine synthase (247 aa).

S-adenosyl-L-methionine is bound by residues tyrosine 39, 64 to 66, 89 to 90, 117 to 118, asparagine 132, and arginine 199; these read GCS, DN, and DI.

Belongs to the class I-like SAM-binding methyltransferase superfamily. Cx-SAM synthase family. Homodimer.

The catalysed reaction is prephenate + S-adenosyl-L-methionine = carboxy-S-adenosyl-L-methionine + 3-phenylpyruvate + H2O. In terms of biological role, catalyzes the conversion of S-adenosyl-L-methionine (SAM) to carboxy-S-adenosyl-L-methionine (Cx-SAM). The protein is Carboxy-S-adenosyl-L-methionine synthase of Klebsiella pneumoniae subsp. pneumoniae (strain ATCC 700721 / MGH 78578).